A 142-amino-acid polypeptide reads, in one-letter code: Cell wall-binding protein YqgA (142 aa).

The first 28 residues, 1–28 (MKQGKFSVFLILLLMLTLVVAPKEKAEA), serve as a signal peptide directing secretion.

In terms of assembly, found in a complex with F(1)F(0) ATP synthase and SpoIIIJ and YqjG.

The protein resides in the secreted. The protein localises to the cell wall. In Bacillus subtilis (strain 168), this protein is Cell wall-binding protein YqgA (yqgA).